The chain runs to 358 residues: Acetylxylan esterase / glucomannan deacetylase (358 aa).

The signal sequence occupies residues 1-18 (MKLLFPILLLTGSYFLSA). C19 is lipidated: N-palmitoyl cysteine. The S-diacylglycerol cysteine moiety is linked to residue C19. Catalysis depends on S160, which acts as the Nucleophile. Catalysis depends on charge relay system residues D333 and H335.

It belongs to the carbohydrate esterase 2 (CE2) family.

It localises to the cell membrane. It catalyses the reaction Deacetylation of xylans and xylo-oligosaccharides.. Its pathway is glycan degradation; xylan degradation. Functionally, involved in the degradation of plant cell wall polysaccharides. Catalyzes the deacetylation of acetylated birchwood xylan and glucomannan, with equal efficiency, and of the synthetic substrate 4-nitrophenyl acetate (4-NPAc). Does not bind cellulose, cellohexaose and beta-glucan. This is Acetylxylan esterase / glucomannan deacetylase from Cellvibrio japonicus (strain Ueda107) (Pseudomonas fluorescens subsp. cellulosa).